The primary structure comprises 281 residues: Probable endonuclease 4 (281 aa).

Zn(2+)-binding residues include H69, H109, E145, D179, H182, H216, D229, H231, and E261.

This sequence belongs to the AP endonuclease 2 family. Zn(2+) is required as a cofactor.

The enzyme catalyses Endonucleolytic cleavage to 5'-phosphooligonucleotide end-products.. In terms of biological role, endonuclease IV plays a role in DNA repair. It cleaves phosphodiester bonds at apurinic or apyrimidinic (AP) sites, generating a 3'-hydroxyl group and a 5'-terminal sugar phosphate. The polypeptide is Probable endonuclease 4 (Pectobacterium atrosepticum (strain SCRI 1043 / ATCC BAA-672) (Erwinia carotovora subsp. atroseptica)).